A 199-amino-acid polypeptide reads, in one-letter code: Melanocortin-2 receptor accessory protein 2B (199 aa).

Asn6 carries N-linked (GlcNAc...) asparagine glycosylation. Residues 39 to 59 (IVIGFWVGLAVFVIFMFFVLT) form a helical membrane-spanning segment.

The protein belongs to the MRAP family. In terms of assembly, interacts with mc4r. As to expression, expressed in adult brain.

It is found in the cell membrane. The protein resides in the endoplasmic reticulum membrane. Its function is as follows. Activator of melanocortin receptor 4 (mc4r), a receptor involved in energy homeostasis. Plays a role after larval development in the control of energy homeostasis and body weight regulation by increasing ligand-sensitivity of mc4r and mc4r-mediated generation of cAMP once the zebrafish begins feeding, increasing the capacity for regulated feeding and growth. The sequence is that of Melanocortin-2 receptor accessory protein 2B (mrap2b) from Danio rerio (Zebrafish).